The sequence spans 371 residues: Probable protein phosphatase 2C 11 (371 aa).

Residues 29–49 (FFFFLFNSQTISSFIIFYLFL) form a helical membrane-spanning segment. Positions 67–95 (PPLSVAPLRGDANSPPPESSSSPATKSSL) are disordered. Residues 85-94 (SSSSPATKSS) show a composition bias toward low complexity. The PPM-type phosphatase domain maps to 123–368 (SYGYSSLKGK…DNITCIVVRF (246 aa)). Residues Asp159, Gly160, Asp320, and Asp359 each coordinate Mn(2+).

The protein belongs to the PP2C family. Requires Mg(2+) as cofactor. The cofactor is Mn(2+).

Its subcellular location is the membrane. The catalysed reaction is O-phospho-L-seryl-[protein] + H2O = L-seryl-[protein] + phosphate. The enzyme catalyses O-phospho-L-threonyl-[protein] + H2O = L-threonyl-[protein] + phosphate. In Arabidopsis thaliana (Mouse-ear cress), this protein is Probable protein phosphatase 2C 11.